The sequence spans 320 residues: Uridine phosphorylase 2 (320 aa).

Residues Gly-66, Arg-100, and 144–147 (RIGT) each bind phosphate. A disulfide bridge links Cys-95 with Cys-102. Uridine contacts are provided by residues 148 to 149 (SG) and 223 to 225 (QGR).

It belongs to the PNP/UDP phosphorylase family. In terms of assembly, homodimer. Liver specific.

The enzyme catalyses uridine + phosphate = alpha-D-ribose 1-phosphate + uracil. It carries out the reaction 2'-deoxyuridine + phosphate = 2-deoxy-alpha-D-ribose 1-phosphate + uracil. Its pathway is pyrimidine metabolism; UMP biosynthesis via salvage pathway; uracil from uridine (phosphorylase route): step 1/1. With respect to regulation, a conditional disulfide bridge can form within the protein that dislocates a critical phosphate-coordinating arginine Arg-100 away from the active site, disabling the enzyme. Functionally, catalyzes the reversible phosphorylytic cleavage of uridine to uracil and ribose-1-phosphate which can then be utilized as carbon and energy sources or in the rescue of pyrimidine bases for nucleotide synthesis. Shows broad substrate specificity and can also accept deoxyuridine and other analogous compounds. The protein is Uridine phosphorylase 2 of Mus musculus (Mouse).